The following is a 527-amino-acid chain: Peptide chain release factor 3 (527 aa).

One can recognise a tr-type G domain in the interval 9–277 (AKRRTFAIIS…AVVDWAPRPL (269 aa)). GTP is bound by residues 18-25 (SHPDAGKT), 86-90 (DTPGH), and 140-143 (NKLD).

This sequence belongs to the TRAFAC class translation factor GTPase superfamily. Classic translation factor GTPase family. PrfC subfamily.

The protein resides in the cytoplasm. Increases the formation of ribosomal termination complexes and stimulates activities of RF-1 and RF-2. It binds guanine nucleotides and has strong preference for UGA stop codons. It may interact directly with the ribosome. The stimulation of RF-1 and RF-2 is significantly reduced by GTP and GDP, but not by GMP. This is Peptide chain release factor 3 from Pseudomonas fluorescens (strain Pf0-1).